The chain runs to 820 residues: Leucine--tRNA ligase (820 aa).

The short motif at 42 to 52 (PYPSGDLHMGH) is the 'HIGH' region element. Residues 576 to 580 (KMSKS) carry the 'KMSKS' region motif. ATP is bound at residue lysine 579.

This sequence belongs to the class-I aminoacyl-tRNA synthetase family.

It localises to the cytoplasm. It catalyses the reaction tRNA(Leu) + L-leucine + ATP = L-leucyl-tRNA(Leu) + AMP + diphosphate. The polypeptide is Leucine--tRNA ligase (Coxiella burnetii (strain RSA 331 / Henzerling II)).